The following is a 183-amino-acid chain: Akirin-1B (183 aa).

The tract at residues 14 to 43 (EALMSPQSPKRRRCAPLPGSPATPSPQRCG) is disordered. An SYVS motif motif is present at residues 180-183 (SYVS).

Belongs to the akirin family.

The protein resides in the nucleus. Functionally, molecular adapter that acts as a bridge between proteins, and which is involved skeletal muscle development. Functions as a signal transducer for MSTN during skeletal muscle regeneration and myogenesis. In Xenopus laevis (African clawed frog), this protein is Akirin-1B (akirin1-b).